The following is a 59-amino-acid chain: Large ribosomal subunit protein uL30 (59 aa).

Belongs to the universal ribosomal protein uL30 family. As to quaternary structure, part of the 50S ribosomal subunit.

In Solidesulfovibrio magneticus (strain ATCC 700980 / DSM 13731 / RS-1) (Desulfovibrio magneticus), this protein is Large ribosomal subunit protein uL30.